The primary structure comprises 347 residues: Haptoglobin (347 aa).

An N-terminal signal peptide occupies residues 1–18 (MRALGAVVTLLLWGQLFA). In terms of domain architecture, Sushi spans 31-88 (DSCPKPPEIANGYVEHLVRYRCRQFYKLQTEGDGIYTLNSEKQWVNPAAGDKLPKCEA). 4 disulfides stabilise this stretch: C52–C86, C90–C207, C250–C281, and C292–C322. A Peptidase S1 domain is found at 103–345 (IIGGSMDAKG…LKDWVQETMA (243 aa)). 2 N-linked (GlcNAc...) asparagine glycosylation sites follow: N148 and N152. Residues 259-264 (VPEKKG) form an interaction with CD163 region.

The protein belongs to the peptidase S1 family. In terms of assembly, tetramer of two alpha and two beta chains; disulfide-linked. The hemoglobin/haptoglobin complex is composed of a haptoglobin dimer bound to two hemoglobin alpha-beta dimers. Interacts with CD163. Interacts with ERGIC3. As to expression, expressed by the liver and secreted in plasma.

The protein resides in the secreted. In terms of biological role, as a result of hemolysis, hemoglobin is found to accumulate in the kidney and is secreted in the urine. Haptoglobin captures, and combines with free plasma hemoglobin to allow hepatic recycling of heme iron and to prevent kidney damage. Haptoglobin also acts as an antioxidant, has antibacterial activity and plays a role in modulating many aspects of the acute phase response. Hemoglobin/haptoglobin complexes are rapidly cleared by the macrophage CD163 scavenger receptor expressed on the surface of liver Kupfer cells through an endocytic lysosomal degradation pathway. This chain is Haptoglobin (Hp), found in Rattus norvegicus (Rat).